Reading from the N-terminus, the 177-residue chain is Centromere protein R (177 aa).

Lysine 8 is covalently cross-linked (Glycyl lysine isopeptide (Lys-Gly) (interchain with G-Cter in SUMO2)). The LXXLL motif motif lies at 9–13 (LDGLL). Serine 17 is subject to Phosphoserine. Residues 20 to 50 (PSKITRKKSVITYSPTTGTCQMSLFASPTSS) are DD1. A Glycyl lysine isopeptide (Lys-Gly) (interchain with G-Cter in SUMO2) cross-link involves residue lysine 22. Serine 28 bears the Phosphoserine mark. The segment covering 41-50 (MSLFASPTSS) has biased composition (polar residues). The disordered stretch occupies residues 41–81 (MSLFASPTSSEEQKHRNGLSNEKRKKLNHPSLTESKESTTK). The short motif at 63–66 (KRKK) is the Nuclear localization signal element. Residue serine 71 is modified to Phosphoserine. Positions 83 to 113 (NDEFMMLLSKVEKLSEEIMEIMQNLSSIQAL) form a coiled coil. Residues 172-176 (LKAIL) carry the LXXIL motif motif.

In terms of assembly, homodimer; mediated by the coiled coil domain. Isoform 3, but not other isoforms, interacts with the cytoplasmic tail of integrin ITGB3. The relevance of the interaction with ITGB3 is however uncertain, since isoform 3 is mainly nuclear. Interacts with CCNA2 and MTA1. Interacts with NFKB1 NF-kappa-B subunit. Component of the CENPA-CAD complex, composed of CENPI, CENPK, CENPL, CENPO, CENPP, CENPQ, CENPR and CENPS. The CENPA-CAD complex interacts with the CENPA-NAC complex, at least composed of CENPA, CENPC, CENPH, CENPM, CENPN, CENPT and CENPU. Interacts with TASOR. In terms of tissue distribution, widely expressed. Expressed in spleen, thymus, prostate, ovary, small intestine and white blood cells. Highly expressed in testis and colon. Isoform 4 is expressed in platelets, lymphocytes and granulocytes.

Its subcellular location is the nucleus. It is found in the chromosome. It localises to the centromere. The protein localises to the kinetochore. The protein resides in the cytoplasm. Its function is as follows. Transcription coregulator that can have both coactivator and corepressor functions. Isoform 1, but not other isoforms, is involved in the coactivation of nuclear receptors for retinoid X (RXRs) and thyroid hormone (TRs) in a ligand-dependent fashion. In contrast, it does not coactivate nuclear receptors for retinoic acid, vitamin D, progesterone receptor, nor glucocorticoid. Acts as a coactivator for estrogen receptor alpha. Acts as a transcriptional corepressor via its interaction with the NFKB1 NF-kappa-B subunit, possibly by interfering with the transactivation domain of NFKB1. Induces apoptosis in breast cancer cells, but not in other cancer cells, via a caspase-2 mediated pathway that involves mitochondrial membrane permeabilization but does not require other caspases. May also act as an inhibitor of cyclin A-associated kinase. Also acts a component of the CENPA-CAD (nucleosome distal) complex, a complex recruited to centromeres which is involved in assembly of kinetochore proteins, mitotic progression and chromosome segregation. May be involved in incorporation of newly synthesized CENPA into centromeres via its interaction with the CENPA-NAC complex. The chain is Centromere protein R (ITGB3BP) from Homo sapiens (Human).